Here is a 75-residue protein sequence, read N- to C-terminus: Parvalbumin beta 3 (75 aa).

Residue alanine 1 is modified to N-acetylalanine. Positions 26–61 constitute an EF-hand domain; it reads YKAFFAKKAFFVIDQDKSGFIEEDELKLFLQVFSAG. Ca(2+) is bound by residues aspartate 39, aspartate 41, serine 43, phenylalanine 45, glutamate 47, and glutamate 50.

This sequence belongs to the parvalbumin family.

Its function is as follows. In muscle, parvalbumin is thought to be involved in relaxation after contraction. It binds two calcium ions. This is Parvalbumin beta 3 from Merluccius gayi (South Pacific hake).